The chain runs to 202 residues: Large ribosomal subunit protein bL25 (202 aa).

The disordered stretch occupies residues 182-202; that stretch reads EVEAEETEDDEAASEGEEAAE. Residues 183–202 are compositionally biased toward acidic residues; the sequence is VEAEETEDDEAASEGEEAAE.

The protein belongs to the bacterial ribosomal protein bL25 family. CTC subfamily. In terms of assembly, part of the 50S ribosomal subunit; part of the 5S rRNA/L5/L18/L25 subcomplex. Contacts the 5S rRNA. Binds to the 5S rRNA independently of L5 and L18.

Functionally, this is one of the proteins that binds to the 5S RNA in the ribosome where it forms part of the central protuberance. This Corynebacterium glutamicum (strain R) protein is Large ribosomal subunit protein bL25.